We begin with the raw amino-acid sequence, 51 residues long: uncharacterized protein (51 aa).

This is an uncharacterized protein from Treponema pallidum (strain Nichols).